Here is a 156-residue protein sequence, read N- to C-terminus: Type IV major fimbrial protein FimA (156 aa).

Residues 1 to 7 constitute a propeptide, leader sequence; it reads MKSLQKG. N-methylphenylalanine is present on phenylalanine 8. Residues 8 to 28 traverse the membrane as a helical segment; sequence FTLIELMIVVAIIGILAAIAI. 2 disulfide bridges follow: cysteine 57–cysteine 67 and cysteine 141–cysteine 154.

This sequence belongs to the N-Me-Phe pilin family. The pili are polar flexible filaments of about 5.4 nanometers diameter and 2.5 micrometers average length; they consist of only a single polypeptide chain arranged in a helical configuration of five subunits per turn in the assembled pilus.

The protein localises to the fimbrium. The protein resides in the membrane. In terms of biological role, major component of the type IV fimbriae that plays an essential role in twitching motility, natural transformation, and protease secretion. In Dichelobacter nodosus (Bacteroides nodosus), this protein is Type IV major fimbrial protein FimA (fimA).